The chain runs to 556 residues: Urocanate hydratase (556 aa).

Residues 52-53 (GG), Gln-130, 176-178 (GMG), Glu-196, Arg-201, 242-243 (NA), 263-267 (QTSAH), 273-274 (YL), and Tyr-322 each bind NAD(+). Cys-410 is an active-site residue. NAD(+) is bound at residue Gly-492.

Belongs to the urocanase family. NAD(+) is required as a cofactor.

The protein localises to the cytoplasm. It carries out the reaction 4-imidazolone-5-propanoate = trans-urocanate + H2O. Its pathway is amino-acid degradation; L-histidine degradation into L-glutamate; N-formimidoyl-L-glutamate from L-histidine: step 2/3. Functionally, catalyzes the conversion of urocanate to 4-imidazolone-5-propionate. This is Urocanate hydratase from Shewanella sp. (strain ANA-3).